A 451-amino-acid polypeptide reads, in one-letter code: Phosphoglucosamine mutase (451 aa).

Ser-107 acts as the Phosphoserine intermediate in catalysis. Residues Ser-107, Asp-246, Asp-248, and Asp-250 each contribute to the Mg(2+) site. Phosphoserine is present on Ser-107.

Belongs to the phosphohexose mutase family. Requires Mg(2+) as cofactor. Post-translationally, activated by phosphorylation.

The enzyme catalyses alpha-D-glucosamine 1-phosphate = D-glucosamine 6-phosphate. Catalyzes the conversion of glucosamine-6-phosphate to glucosamine-1-phosphate. This chain is Phosphoglucosamine mutase, found in Burkholderia cenocepacia (strain ATCC BAA-245 / DSM 16553 / LMG 16656 / NCTC 13227 / J2315 / CF5610) (Burkholderia cepacia (strain J2315)).